The chain runs to 203 residues: Protein GrpE (203 aa).

A compositionally biased stretch (basic and acidic residues) spans 1 to 10 (MSNESIKAEQ). The segment at 1 to 20 (MSNESIKAEQDLIQEGVESE) is disordered.

Belongs to the GrpE family. In terms of assembly, homodimer.

Its subcellular location is the cytoplasm. Its function is as follows. Participates actively in the response to hyperosmotic and heat shock by preventing the aggregation of stress-denatured proteins, in association with DnaK and GrpE. It is the nucleotide exchange factor for DnaK and may function as a thermosensor. Unfolded proteins bind initially to DnaJ; upon interaction with the DnaJ-bound protein, DnaK hydrolyzes its bound ATP, resulting in the formation of a stable complex. GrpE releases ADP from DnaK; ATP binding to DnaK triggers the release of the substrate protein, thus completing the reaction cycle. Several rounds of ATP-dependent interactions between DnaJ, DnaK and GrpE are required for fully efficient folding. In Shewanella sp. (strain MR-7), this protein is Protein GrpE.